The sequence spans 320 residues: MRSAQVYRWQIPMDAGVVLRDRRLKTRDGLYVCLREGEREGWGEISPLPGFSQETWEDAQSVLLAWVNNWLAGDCELPQMPSVAFGVSCALAELAETLPQAANYRAAPLCNGDPDDLILKLADMPGEKVAKVKVGLYEAVRDGMVVNLLLEAIPDLHLRLDANRAWTPLKGQQFAKYVNPDYRHRIAFLEEPCKTRDDSRAFARETDIAIAWDESLREPDFAFVAEEGVRAVVIKPTLTGSLEKVREQVKAAHALGLTAVISSSIESSLGLTQLARIAAWLTPDTIPGLDTLDLMQAQQVRRWPGSPLPLVDVDALERLL.

Lys-133 acts as the Proton donor in catalysis. Positions 161, 190, and 213 each coordinate Mg(2+). Lys-235 acts as the Proton acceptor in catalysis.

The protein belongs to the mandelate racemase/muconate lactonizing enzyme family. MenC type 1 subfamily. The cofactor is a divalent metal cation.

It catalyses the reaction (1R,6R)-6-hydroxy-2-succinyl-cyclohexa-2,4-diene-1-carboxylate = 2-succinylbenzoate + H2O. Its pathway is quinol/quinone metabolism; 1,4-dihydroxy-2-naphthoate biosynthesis; 1,4-dihydroxy-2-naphthoate from chorismate: step 4/7. The protein operates within quinol/quinone metabolism; menaquinone biosynthesis. Functionally, converts 2-succinyl-6-hydroxy-2,4-cyclohexadiene-1-carboxylate (SHCHC) to 2-succinylbenzoate (OSB). The chain is o-succinylbenzoate synthase from Escherichia coli O6:K15:H31 (strain 536 / UPEC).